The primary structure comprises 251 residues: Imidazole glycerol phosphate synthase subunit HisF (251 aa).

Catalysis depends on residues aspartate 12 and aspartate 131.

The protein belongs to the HisA/HisF family. In terms of assembly, heterodimer of HisH and HisF.

The protein localises to the cytoplasm. It catalyses the reaction 5-[(5-phospho-1-deoxy-D-ribulos-1-ylimino)methylamino]-1-(5-phospho-beta-D-ribosyl)imidazole-4-carboxamide + L-glutamine = D-erythro-1-(imidazol-4-yl)glycerol 3-phosphate + 5-amino-1-(5-phospho-beta-D-ribosyl)imidazole-4-carboxamide + L-glutamate + H(+). The protein operates within amino-acid biosynthesis; L-histidine biosynthesis; L-histidine from 5-phospho-alpha-D-ribose 1-diphosphate: step 5/9. Functionally, IGPS catalyzes the conversion of PRFAR and glutamine to IGP, AICAR and glutamate. The HisF subunit catalyzes the cyclization activity that produces IGP and AICAR from PRFAR using the ammonia provided by the HisH subunit. In Streptomyces avermitilis (strain ATCC 31267 / DSM 46492 / JCM 5070 / NBRC 14893 / NCIMB 12804 / NRRL 8165 / MA-4680), this protein is Imidazole glycerol phosphate synthase subunit HisF.